A 444-amino-acid polypeptide reads, in one-letter code: Phosphomethylpyrimidine synthase (444 aa).

Substrate-binding positions include Asn80, Met109, Tyr138, His174, 194–196 (SRG), 235–238 (DSLR), and Glu274. His278 is a binding site for Zn(2+). Tyr301 is a binding site for substrate. A Zn(2+)-binding site is contributed by His342. Residues Cys422, Cys425, and Cys430 each coordinate [4Fe-4S] cluster.

This sequence belongs to the ThiC family. In terms of assembly, homodimer. The cofactor is [4Fe-4S] cluster.

The catalysed reaction is 5-amino-1-(5-phospho-beta-D-ribosyl)imidazole + S-adenosyl-L-methionine = 4-amino-2-methyl-5-(phosphooxymethyl)pyrimidine + CO + 5'-deoxyadenosine + formate + L-methionine + 3 H(+). It participates in cofactor biosynthesis; thiamine diphosphate biosynthesis. Its function is as follows. Catalyzes the synthesis of the hydroxymethylpyrimidine phosphate (HMP-P) moiety of thiamine from aminoimidazole ribotide (AIR) in a radical S-adenosyl-L-methionine (SAM)-dependent reaction. The chain is Phosphomethylpyrimidine synthase from Nitratiruptor sp. (strain SB155-2).